A 313-amino-acid polypeptide reads, in one-letter code: Phenylalanine-4-hydroxylase (313 aa).

Positions 154, 159, and 200 each coordinate Fe cation.

This sequence belongs to the biopterin-dependent aromatic amino acid hydroxylase family. Fe(2+) is required as a cofactor.

The enzyme catalyses (6R)-L-erythro-5,6,7,8-tetrahydrobiopterin + L-phenylalanine + O2 = (4aS,6R)-4a-hydroxy-L-erythro-5,6,7,8-tetrahydrobiopterin + L-tyrosine. It participates in amino-acid degradation; L-phenylalanine degradation; acetoacetate and fumarate from L-phenylalanine: step 1/6. This is Phenylalanine-4-hydroxylase (phhA) from Ralstonia nicotianae (strain ATCC BAA-1114 / GMI1000) (Ralstonia solanacearum).